A 394-amino-acid chain; its full sequence is MEKKKNNNNGGDFGEEESSIDGDILESILSYLPLLDLDSACQVSKSWNRAVFYSLRRLKTMPWLFVYNQRNSPPYTMATMAMAYDPKSEAWIELNTASSPVEHVSVARSSHSTLLYALSPARFSFSTDAFHLTWQHVAPPRVWRIDPIVAVVGRSLIIAGGVCDFEEDRFAVELFDIESGDGAWERCESMPDFLYESASSTWLSVAVSSEKMYVTEKRSGVTCSFNPVTRSWTKLLDLCPGECSLYSRSIGFSVNRLIMAGIIGDEYNPTGIELWEVIDSDESHLKFESIGSMPETYLEKLRGINSDWPLTSIVLNAVGDMVYVHGAAENGGEIVAAEIEGGKLCKWRTLPNADATWKKSHAAERVIVACSNVGFSDLKLAFRNNLSFLSTSKY.

The F-box domain maps to 15–62 (EEESSIDGDILESILSYLPLLDLDSACQVSKSWNRAVFYSLRRLKTMP). 4 Kelch repeats span residues 65–111 (FVYN…RSSH), 155–204 (SLII…TWLS), 206–252 (AVSS…SIGF), and 321–369 (MVYV…VIVA).

The chain is F-box/kelch-repeat protein At1g23390 from Arabidopsis thaliana (Mouse-ear cress).